A 427-amino-acid chain; its full sequence is Glutamate-1-semialdehyde 2,1-aminomutase (427 aa).

The residue at position 265 (K265) is an N6-(pyridoxal phosphate)lysine.

It belongs to the class-III pyridoxal-phosphate-dependent aminotransferase family. HemL subfamily. In terms of assembly, homodimer. Requires pyridoxal 5'-phosphate as cofactor.

The protein resides in the cytoplasm. The catalysed reaction is (S)-4-amino-5-oxopentanoate = 5-aminolevulinate. The protein operates within porphyrin-containing compound metabolism; protoporphyrin-IX biosynthesis; 5-aminolevulinate from L-glutamyl-tRNA(Glu): step 2/2. The sequence is that of Glutamate-1-semialdehyde 2,1-aminomutase from Colwellia psychrerythraea (strain 34H / ATCC BAA-681) (Vibrio psychroerythus).